The following is a 228-amino-acid chain: ATP-dependent dethiobiotin synthetase BioD (228 aa).

Aspartate 13–phenylalanine 18 is an ATP binding site. Threonine 17 is a binding site for Mg(2+). Lysine 38 is an active-site residue. Residue serine 42 coordinates substrate. ATP is bound by residues aspartate 55, glutamate 116–glycine 119, asparagine 179–lysine 180, and proline 208–isoleucine 210. 2 residues coordinate Mg(2+): aspartate 55 and glutamate 116.

It belongs to the dethiobiotin synthetase family. As to quaternary structure, homodimer. Mg(2+) is required as a cofactor.

Its subcellular location is the cytoplasm. It catalyses the reaction (7R,8S)-7,8-diammoniononanoate + CO2 + ATP = (4R,5S)-dethiobiotin + ADP + phosphate + 3 H(+). It participates in cofactor biosynthesis; biotin biosynthesis; biotin from 7,8-diaminononanoate: step 1/2. In terms of biological role, catalyzes a mechanistically unusual reaction, the ATP-dependent insertion of CO2 between the N7 and N8 nitrogen atoms of 7,8-diaminopelargonic acid (DAPA, also called 7,8-diammoniononanoate) to form a ureido ring. This chain is ATP-dependent dethiobiotin synthetase BioD, found in Clostridium perfringens (strain 13 / Type A).